Reading from the N-terminus, the 89-residue chain is Protein WFDC9 (89 aa).

An N-terminal signal peptide occupies residues 1–23 (MKPWILLLVMFISGVVMLLPVLG).

Its subcellular location is the secreted. In Homo sapiens (Human), this protein is Protein WFDC9 (WFDC9).